Reading from the N-terminus, the 361-residue chain is Nicotinate-nucleotide--dimethylbenzimidazole phosphoribosyltransferase (361 aa).

Glutamate 314 functions as the Proton acceptor in the catalytic mechanism.

This sequence belongs to the CobT family.

It catalyses the reaction 5,6-dimethylbenzimidazole + nicotinate beta-D-ribonucleotide = alpha-ribazole 5'-phosphate + nicotinate + H(+). It functions in the pathway nucleoside biosynthesis; alpha-ribazole biosynthesis; alpha-ribazole from 5,6-dimethylbenzimidazole: step 1/2. Its function is as follows. Catalyzes the synthesis of alpha-ribazole-5'-phosphate from nicotinate mononucleotide (NAMN) and 5,6-dimethylbenzimidazole (DMB). The polypeptide is Nicotinate-nucleotide--dimethylbenzimidazole phosphoribosyltransferase (Mycobacterium bovis (strain BCG / Pasteur 1173P2)).